The sequence spans 240 residues: NADH-quinone oxidoreductase subunit C (240 aa).

The segment at 1–82 (MSEEEKPKPK…PVDENRDPEP (82 aa)) is disordered. Positions 11 to 20 (LSPALAAKMA) are enriched in low complexity. The segment covering 67 to 82 (DKPKAEPVDENRDPEP) has biased composition (basic and acidic residues).

The protein belongs to the complex I 30 kDa subunit family. In terms of assembly, NDH-1 is composed of 14 different subunits. Subunits NuoB, C, D, E, F, and G constitute the peripheral sector of the complex.

Its subcellular location is the cell inner membrane. The catalysed reaction is a quinone + NADH + 5 H(+)(in) = a quinol + NAD(+) + 4 H(+)(out). Functionally, NDH-1 shuttles electrons from NADH, via FMN and iron-sulfur (Fe-S) centers, to quinones in the respiratory chain. The immediate electron acceptor for the enzyme in this species is believed to be a menaquinone. Couples the redox reaction to proton translocation (for every two electrons transferred, four hydrogen ions are translocated across the cytoplasmic membrane), and thus conserves the redox energy in a proton gradient. This Chloroherpeton thalassium (strain ATCC 35110 / GB-78) protein is NADH-quinone oxidoreductase subunit C.